Reading from the N-terminus, the 647-residue chain is Nucleolar GTP-binding protein 1 (647 aa).

The OBG-type G domain maps to 168 to 340; it reads RTLLICGYPN…VRNKACEKLL (173 aa). GTP-binding positions include 174 to 181, 220 to 224, and 288 to 291; these read GYPNVGKS, DTPGI, and NKTD. A Phosphoserine modification is found at S563. The interval 594 to 647 is disordered; it reads ADGSMRSKADRMAKMERRERNRHAKQGESDRHNAVSLSKHLFSGKRGVGKTDFR. Residues 598–626 are compositionally biased toward basic and acidic residues; that stretch reads MRSKADRMAKMERRERNRHAKQGESDRHN.

It belongs to the TRAFAC class OBG-HflX-like GTPase superfamily. OBG GTPase family. NOG subfamily. In terms of assembly, associated with nucleolar and cytoplasmic pre-60S particles. Directly interacts with RLP24.

The protein resides in the nucleus. Its subcellular location is the nucleolus. In terms of biological role, involved in the biogenesis of the 60S ribosomal subunit. The polypeptide is Nucleolar GTP-binding protein 1 (NOG1) (Saccharomyces cerevisiae (strain ATCC 204508 / S288c) (Baker's yeast)).